The primary structure comprises 75 residues: Large ribosomal subunit protein uL30 (75 aa).

It belongs to the universal ribosomal protein uL30 family. Part of the 50S ribosomal subunit.

The polypeptide is Large ribosomal subunit protein uL30 (Roseiflexus castenholzii (strain DSM 13941 / HLO8)).